We begin with the raw amino-acid sequence, 42 residues long: Potassium channel toxin gamma-KTx 1.8 (42 aa).

Disulfide bonds link C5/C23, C11/C34, C20/C39, and C24/C41.

Belongs to the ergtoxin family. Gamma-KTx 1 subfamily. In terms of tissue distribution, expressed by the venom gland.

The protein localises to the secreted. Blocks in a reversible manner human and rat Kv11.1/KCNH2/ERG1 potassium channels. Also completely and irreversibly blocks rat Kv11.2/KCNH6/ERG2 and human Kv11.3/KCNH7/ERG3 channels. Also weakly inhibits Kir2.1/KCNJ2 and Kv1.2/KCNA2 potassium channels. The chain is Potassium channel toxin gamma-KTx 1.8 from Centruroides elegans (Bark scorpion).